We begin with the raw amino-acid sequence, 89 residues long: Small ribosomal subunit protein uS15 (89 aa).

The protein belongs to the universal ribosomal protein uS15 family. In terms of assembly, part of the 30S ribosomal subunit. Forms a bridge to the 50S subunit in the 70S ribosome, contacting the 23S rRNA.

One of the primary rRNA binding proteins, it binds directly to 16S rRNA where it helps nucleate assembly of the platform of the 30S subunit by binding and bridging several RNA helices of the 16S rRNA. Its function is as follows. Forms an intersubunit bridge (bridge B4) with the 23S rRNA of the 50S subunit in the ribosome. This Shewanella putrefaciens (strain CN-32 / ATCC BAA-453) protein is Small ribosomal subunit protein uS15.